A 304-amino-acid chain; its full sequence is GTPase Era (304 aa).

The region spanning 7-178 (KCGVVAVLGA…KNALAALMPE (172 aa)) is the Era-type G domain. A G1 region spans residues 15 to 22 (GAPNAGKS). Position 15–22 (15–22 (GAPNAGKS)) interacts with GTP. The G2 stretch occupies residues 41–45 (QTTRA). The interval 66–69 (DTPG) is G3. GTP-binding positions include 66–70 (DTPGI) and 128–131 (NKVD). The interval 128-131 (NKVD) is G4. The interval 157 to 159 (VSA) is G5. Residues 209-286 (LHEELPYDSA…HLFLHVKVDE (78 aa)) form the KH type-2 domain.

This sequence belongs to the TRAFAC class TrmE-Era-EngA-EngB-Septin-like GTPase superfamily. Era GTPase family. As to quaternary structure, monomer.

It localises to the cytoplasm. Its subcellular location is the cell inner membrane. Functionally, an essential GTPase that binds both GDP and GTP, with rapid nucleotide exchange. Plays a role in 16S rRNA processing and 30S ribosomal subunit biogenesis and possibly also in cell cycle regulation and energy metabolism. In Erythrobacter litoralis (strain HTCC2594), this protein is GTPase Era.